We begin with the raw amino-acid sequence, 202 residues long: Imidazole glycerol phosphate synthase subunit HisH (202 aa).

Residues 3-202 (RIVIIDYGLG…KILRNFVEMC (200 aa)) form the Glutamine amidotransferase type-1 domain. The Nucleophile role is filled by cysteine 79. Residues histidine 183 and glutamate 185 contribute to the active site.

As to quaternary structure, heterodimer of HisH and HisF.

Its subcellular location is the cytoplasm. It carries out the reaction 5-[(5-phospho-1-deoxy-D-ribulos-1-ylimino)methylamino]-1-(5-phospho-beta-D-ribosyl)imidazole-4-carboxamide + L-glutamine = D-erythro-1-(imidazol-4-yl)glycerol 3-phosphate + 5-amino-1-(5-phospho-beta-D-ribosyl)imidazole-4-carboxamide + L-glutamate + H(+). The catalysed reaction is L-glutamine + H2O = L-glutamate + NH4(+). It participates in amino-acid biosynthesis; L-histidine biosynthesis; L-histidine from 5-phospho-alpha-D-ribose 1-diphosphate: step 5/9. Its function is as follows. IGPS catalyzes the conversion of PRFAR and glutamine to IGP, AICAR and glutamate. The HisH subunit catalyzes the hydrolysis of glutamine to glutamate and ammonia as part of the synthesis of IGP and AICAR. The resulting ammonia molecule is channeled to the active site of HisF. This Methanosarcina mazei (strain ATCC BAA-159 / DSM 3647 / Goe1 / Go1 / JCM 11833 / OCM 88) (Methanosarcina frisia) protein is Imidazole glycerol phosphate synthase subunit HisH.